Consider the following 371-residue polypeptide: 2-aminoethylphosphonate--pyruvate transaminase (371 aa).

Residue lysine 195 is modified to N6-(pyridoxal phosphate)lysine.

This sequence belongs to the class-V pyridoxal-phosphate-dependent aminotransferase family. PhnW subfamily. As to quaternary structure, homotetramer; however this is for an enzyme with a molecular weight of 16500, which is in disagreement with the weight of this protein. Pyridoxal 5'-phosphate is required as a cofactor.

It carries out the reaction (2-aminoethyl)phosphonate + pyruvate = phosphonoacetaldehyde + L-alanine. With respect to regulation, inhibited by phosphonic acids and very slightly inhibited by aminophosphonic acids. In terms of biological role, involved in phosphonate degradation. The polypeptide is 2-aminoethylphosphonate--pyruvate transaminase (phnW) (Pseudomonas aeruginosa (strain ATCC 15692 / DSM 22644 / CIP 104116 / JCM 14847 / LMG 12228 / 1C / PRS 101 / PAO1)).